A 66-amino-acid polypeptide reads, in one-letter code: Large ribosomal subunit protein bL35 (66 aa).

It belongs to the bacterial ribosomal protein bL35 family.

The sequence is that of Large ribosomal subunit protein bL35 from Treponema pallidum (strain Nichols).